A 304-amino-acid polypeptide reads, in one-letter code: Uricase (304 aa).

Alanine 2 bears the N-acetylalanine mark. 2 positions are modified to N6-acetyllysine; alternate: lysine 10 and lysine 23. N6-succinyllysine; alternate is present on residues lysine 10 and lysine 23. The Charge relay system role is filled by lysine 23. N6-acetyllysine occurs at positions 27 and 36. A phosphoserine mark is found at serine 39 and serine 63. Threonine 68 functions as the Charge relay system in the catalytic mechanism. Residues threonine 68 and aspartate 69 each contribute to the urate site. Lysine 118, lysine 122, and lysine 164 each carry N6-acetyllysine. Urate is bound at residue phenylalanine 170. Residues lysine 175 and lysine 185 each carry the N6-acetyllysine modification. Arginine 187 serves as a coordination point for urate. Lysine 221 and lysine 228 each carry N6-acetyllysine; alternate. Lysine 221 and lysine 228 each carry N6-succinyllysine; alternate. Serine 232 is subject to Phosphoserine. Positions 235, 236, and 262 each coordinate urate. Catalysis depends on histidine 264, which acts as the Charge relay system. Lysine 278 bears the N6-acetyllysine mark. Tyrosine 289 bears the Phosphotyrosine mark. Positions 302–304 (SRL) match the Microbody targeting signal motif.

Belongs to the uricase family.

The protein resides in the peroxisome. The enzyme catalyses urate + O2 + H2O = 5-hydroxyisourate + H2O2. It functions in the pathway purine metabolism; urate degradation; (S)-allantoin from urate: step 1/3. In terms of biological role, catalyzes the oxidation of uric acid to 5-hydroxyisourate, which is further processed to form (S)-allantoin. This Macaca fascicularis (Crab-eating macaque) protein is Uricase (UOX).